We begin with the raw amino-acid sequence, 317 residues long: UAP56-interacting factor (317 aa).

Met-1 is modified (N-acetylmethionine). Residues 1–23 (MNRFGTRLVGATATTPPAPKARS) are disordered. Thr-14 bears the Phosphothreonine mark. A Phosphoserine modification is found at Ser-23. The UAP56-binding motif motif lies at 26-44 (NLDKIDMSLDEIIKLNRKE). Phosphoserine occurs at positions 60 and 117. Residue Lys-139 forms a Glycyl lysine isopeptide (Lys-Gly) (interchain with G-Cter in SUMO1) linkage. A Glycyl lysine isopeptide (Lys-Gly) (interchain with G-Cter in SUMO2) cross-link involves residue Lys-260.

It belongs to the UIF family. In terms of assembly, interacts with DDX39B/UAP56 and NXF1; interaction with DDX39B/UAP56 and NXF1 are mutually exclusive. Interacts with SSRP1; required for its recruitment to mRNAs. Interacts with CHTOP.

The protein localises to the nucleus. It is found in the nucleoplasm. The protein resides in the nucleus speckle. Functionally, required for mRNA export from the nucleus to the cytoplasm. Acts as an adapter that uses the DDX39B/UAP56-NFX1 pathway to ensure efficient mRNA export and delivering to the nuclear pore. Associates with spliced and unspliced mRNAs simultaneously with ALYREF/THOC4. The protein is UAP56-interacting factor (Fyttd1) of Rattus norvegicus (Rat).